The following is a 153-amino-acid chain: Phosphoribosyl-AMP cyclohydrolase (153 aa).

Mg(2+) is bound at residue Asp-93. Zn(2+) is bound at residue Cys-94. Residues Asp-95 and Asp-97 each contribute to the Mg(2+) site. Cys-112 and Cys-119 together coordinate Zn(2+).

It belongs to the PRA-CH family. In terms of assembly, homodimer. Mg(2+) is required as a cofactor. Requires Zn(2+) as cofactor.

The protein resides in the cytoplasm. The enzyme catalyses 1-(5-phospho-beta-D-ribosyl)-5'-AMP + H2O = 1-(5-phospho-beta-D-ribosyl)-5-[(5-phospho-beta-D-ribosylamino)methylideneamino]imidazole-4-carboxamide. The protein operates within amino-acid biosynthesis; L-histidine biosynthesis; L-histidine from 5-phospho-alpha-D-ribose 1-diphosphate: step 3/9. In terms of biological role, catalyzes the hydrolysis of the adenine ring of phosphoribosyl-AMP. The protein is Phosphoribosyl-AMP cyclohydrolase of Mesorhizobium japonicum (strain LMG 29417 / CECT 9101 / MAFF 303099) (Mesorhizobium loti (strain MAFF 303099)).